Consider the following 834-residue polypeptide: ATP-dependent 6-phosphofructokinase (834 aa).

The tract at residues 1 to 426 (MTTTSKIIND…FYEIFIACSN (426 aa)) is N-terminal catalytic PFK domain 1. Residues Gly-62, 123–124 (RS), and 153–156 (GDGS) contribute to the ATP site. Residue Asp-154 coordinates Mg(2+). Substrate-binding positions include 199 to 201 (SID), Arg-236, 243 to 245 (MGR), Glu-299, Arg-326, and 332 to 335 (HVQR). The active-site Proton acceptor is Asp-201. An interdomain linker region spans residues 427 to 437 (LHRRKVESKGM). Positions 438–834 (GVLILHSGGP…DPNVNPQFTL (397 aa)) are C-terminal regulatory PFK domain 2. Beta-D-fructose 2,6-bisphosphate-binding positions include Arg-507, 566 to 570 (TIANN), Arg-603, 610 to 612 (MGA), Glu-666, Arg-692, 698 to 701 (HLQQ), and Arg-764. Residues 799–834 (SNLSEQDRPIKKSDISSPTSYSQKTFDPNVNPQFTL) form a disordered region. Positions 803–812 (EQDRPIKKSD) are enriched in basic and acidic residues. The segment covering 813-834 (ISSPTSYSQKTFDPNVNPQFTL) has biased composition (polar residues).

Belongs to the phosphofructokinase type A (PFKA) family. ATP-dependent PFK group I subfamily. Eukaryotic two domain clade 'E' sub-subfamily. In terms of assembly, homotetramer. Mg(2+) is required as a cofactor. In terms of processing, the N-terminus is blocked.

The protein localises to the cytoplasm. It catalyses the reaction beta-D-fructose 6-phosphate + ATP = beta-D-fructose 1,6-bisphosphate + ADP + H(+). It participates in carbohydrate degradation; glycolysis; D-glyceraldehyde 3-phosphate and glycerone phosphate from D-glucose: step 3/4. With respect to regulation, allosterically activated by ADP, AMP, or fructose 2,6-bisphosphate, and allosterically inhibited by ATP or citrate. In terms of biological role, catalyzes the phosphorylation of D-fructose 6-phosphate to fructose 1,6-bisphosphate by ATP, the first committing step of glycolysis. This chain is ATP-dependent 6-phosphofructokinase (pfkA), found in Dictyostelium discoideum (Social amoeba).